Here is a 473-residue protein sequence, read N- to C-terminus: ATP synthase subunit beta (473 aa).

Position 156-163 (156-163) interacts with ATP; the sequence is GGAGVGKT.

The protein belongs to the ATPase alpha/beta chains family. F-type ATPases have 2 components, CF(1) - the catalytic core - and CF(0) - the membrane proton channel. CF(1) has five subunits: alpha(3), beta(3), gamma(1), delta(1), epsilon(1). CF(0) has three main subunits: a(1), b(2) and c(9-12). The alpha and beta chains form an alternating ring which encloses part of the gamma chain. CF(1) is attached to CF(0) by a central stalk formed by the gamma and epsilon chains, while a peripheral stalk is formed by the delta and b chains.

It is found in the cell inner membrane. The catalysed reaction is ATP + H2O + 4 H(+)(in) = ADP + phosphate + 5 H(+)(out). Produces ATP from ADP in the presence of a proton gradient across the membrane. The catalytic sites are hosted primarily by the beta subunits. The polypeptide is ATP synthase subunit beta (Desulfovibrio desulfuricans (strain ATCC 27774 / DSM 6949 / MB)).